The following is a 531-amino-acid chain: NADH-quinone oxidoreductase subunit N (531 aa).

The next 14 helical transmembrane spans lie at Val-8 to Leu-28, Ala-41 to Ala-61, Ala-81 to Ala-101, Gly-146 to Phe-166, Leu-172 to Leu-192, Phe-208 to Ala-228, Ala-250 to Phe-270, Pro-282 to Leu-302, Pro-318 to Gln-338, Val-350 to Ala-370, Leu-372 to Val-392, Ile-418 to Gly-438, Gly-453 to Val-473, and Ala-500 to Leu-520.

Belongs to the complex I subunit 2 family. NDH-1 is composed of 14 different subunits. Subunits NuoA, H, J, K, L, M, N constitute the membrane sector of the complex.

Its subcellular location is the cell membrane. It carries out the reaction a quinone + NADH + 5 H(+)(in) = a quinol + NAD(+) + 4 H(+)(out). Its function is as follows. NDH-1 shuttles electrons from NADH, via FMN and iron-sulfur (Fe-S) centers, to quinones in the respiratory chain. The immediate electron acceptor for the enzyme in this species is believed to be a menaquinone. Couples the redox reaction to proton translocation (for every two electrons transferred, four hydrogen ions are translocated across the cytoplasmic membrane), and thus conserves the redox energy in a proton gradient. The polypeptide is NADH-quinone oxidoreductase subunit N (Mycobacterium bovis (strain ATCC BAA-935 / AF2122/97)).